The following is a 352-amino-acid chain: Protein RecA (352 aa).

Position 67 to 74 (67 to 74 (GPESSGKT)) interacts with ATP. The interval 330-352 (STPKPEAESQEKAAAAQDDDSLV) is disordered.

This sequence belongs to the RecA family.

Its subcellular location is the cytoplasm. In terms of biological role, can catalyze the hydrolysis of ATP in the presence of single-stranded DNA, the ATP-dependent uptake of single-stranded DNA by duplex DNA, and the ATP-dependent hybridization of homologous single-stranded DNAs. It interacts with LexA causing its activation and leading to its autocatalytic cleavage. This is Protein RecA from Chromohalobacter salexigens (strain ATCC BAA-138 / DSM 3043 / CIP 106854 / NCIMB 13768 / 1H11).